Consider the following 909-residue polypeptide: Protein NLP1 (909 aa).

Disordered regions lie at residues 51–71, 536–556, 568–605, and 690–745; these read KSLK…DNSP, KEDP…PVPN, ASTP…RAKT, and NSPN…ENTG. Over residues 55–70 the composition is skewed to polar residues; sequence QTEQSPSASTAMNDNS. The RWP-RK domain maps to 595–676; sequence RRPGEKKRAK…MDSVQGAQGS (82 aa). Residues 690-716 are compositionally biased toward polar residues; sequence NSPNMSSNGPSLKSNEQPSHLNAQTDN. The segment covering 725–745 has biased composition (low complexity); the sequence is RSPSSSCSKSSGSSNNNENTG. A PB1 domain is found at 811–894; sequence AIKVKATFGE…HTIKISLNEA (84 aa).

The protein resides in the nucleus. Functionally, probable transcription factor. In Arabidopsis thaliana (Mouse-ear cress), this protein is Protein NLP1 (NLP1).